The sequence spans 80 residues: Exodeoxyribonuclease 7 small subunit (80 aa).

Belongs to the XseB family. In terms of assembly, heterooligomer composed of large and small subunits.

Its subcellular location is the cytoplasm. It catalyses the reaction Exonucleolytic cleavage in either 5'- to 3'- or 3'- to 5'-direction to yield nucleoside 5'-phosphates.. Its function is as follows. Bidirectionally degrades single-stranded DNA into large acid-insoluble oligonucleotides, which are then degraded further into small acid-soluble oligonucleotides. The polypeptide is Exodeoxyribonuclease 7 small subunit (Rickettsia typhi (strain ATCC VR-144 / Wilmington)).